Reading from the N-terminus, the 111-residue chain is Large ribosomal subunit protein P2 (111 aa).

The interval 62 to 111 (LASVPSGGAGGAAAAGGAAAAGGAAEAAPEEAKEEEKEESDDDMGFGLFD) is disordered. The segment covering 76 to 88 (AGGAAAAGGAAEA) has biased composition (low complexity). Position 101 is a phosphoserine (Ser101).

It belongs to the eukaryotic ribosomal protein P1/P2 family. As to quaternary structure, P1 and P2 exist as dimers at the large ribosomal subunit.

In terms of biological role, plays an important role in the elongation step of protein synthesis. This is Large ribosomal subunit protein P2 from Podospora anserina (Pleurage anserina).